The sequence spans 80 residues: Acyl carrier protein (80 aa).

The Carrier domain occupies 4–79 (EEILQKVCSI…DAVKFIEEKK (76 aa)). Ser-39 bears the O-(pantetheine 4'-phosphoryl)serine mark.

The protein belongs to the acyl carrier protein (ACP) family. In terms of processing, 4'-phosphopantetheine is transferred from CoA to a specific serine of apo-ACP by AcpS. This modification is essential for activity because fatty acids are bound in thioester linkage to the sulfhydryl of the prosthetic group.

It localises to the cytoplasm. It participates in lipid metabolism; fatty acid biosynthesis. Carrier of the growing fatty acid chain in fatty acid biosynthesis. This chain is Acyl carrier protein, found in Prochlorococcus marinus subsp. pastoris (strain CCMP1986 / NIES-2087 / MED4).